Reading from the N-terminus, the 413-residue chain is Multifunctional CCA protein (413 aa).

Residues G8 and R11 each contribute to the ATP site. CTP-binding residues include G8 and R11. 2 residues coordinate Mg(2+): D21 and D23. R91, R137, and R140 together coordinate ATP. The CTP site is built by R91, R137, and R140. One can recognise an HD domain in the interval 228-329 (TGIHTLMTLS…VKLFDSIDAW (102 aa)).

It belongs to the tRNA nucleotidyltransferase/poly(A) polymerase family. Bacterial CCA-adding enzyme type 1 subfamily. Monomer. Can also form homodimers and oligomers. It depends on Mg(2+) as a cofactor. The cofactor is Ni(2+).

The catalysed reaction is a tRNA precursor + 2 CTP + ATP = a tRNA with a 3' CCA end + 3 diphosphate. It catalyses the reaction a tRNA with a 3' CCA end + 2 CTP + ATP = a tRNA with a 3' CCACCA end + 3 diphosphate. In terms of biological role, catalyzes the addition and repair of the essential 3'-terminal CCA sequence in tRNAs without using a nucleic acid template. Adds these three nucleotides in the order of C, C, and A to the tRNA nucleotide-73, using CTP and ATP as substrates and producing inorganic pyrophosphate. tRNA 3'-terminal CCA addition is required both for tRNA processing and repair. Also involved in tRNA surveillance by mediating tandem CCA addition to generate a CCACCA at the 3' terminus of unstable tRNAs. While stable tRNAs receive only 3'-terminal CCA, unstable tRNAs are marked with CCACCA and rapidly degraded. The chain is Multifunctional CCA protein from Citrobacter koseri (strain ATCC BAA-895 / CDC 4225-83 / SGSC4696).